The primary structure comprises 92 residues: Progonadoliberin-1 (92 aa).

The N-terminal stretch at 1–23 is a signal peptide; that stretch reads METIPKLMAAVVLLTVCLEGCSS. Gln24 carries the post-translational modification Pyrrolidone carboxylic acid. Gly33 bears the Glycine amide mark.

The protein belongs to the GnRH family. In terms of processing, the precursor is cleaved by ACE, which removes the Gly-Lys-Arg peptide at the C-terminus, leading to mature hormone. The mature form of Gonadoliberin-1 is also cleaved and degraded by ACE. As to expression, central nervous system.

It is found in the secreted. Stimulates the secretion of gonadotropins; it stimulates the secretion of both luteinizing and follicle-stimulating hormones. The sequence is that of Progonadoliberin-1 (Gnrh1) from Rattus norvegicus (Rat).